We begin with the raw amino-acid sequence, 450 residues long: MGKYFGTDGVRGEANLELTPELAFKLGRFGGYVLSQHETEAPKVFVGRDTRISGEMLESALVAGLLSVGIHVYKLGVLATPAVAYLVETEGASAGVMISASHNPALDNGIKFFGGDGFKLDDEKEAEIEALLDAEEDTLPRPSAEGLGILVDYPEGLRKYEGYLVSTGTPLDGMKVALDTANGAASTSARQIFADLGAQLTVIGETPDGLNINLNVGSTHPEALQEVVKESGSAIGLAFDGDSDRLIAVDENGDIVDGDKIMYIIGKYLSEKGQLAQNTIVTTVMSNLGFHKALNREGINKAVTAVGDRYVVEEMRKSGYNLGGEQSGHVILMDYNTTGDGQLSAVQLTKIMKETGKSLSELAAEVTIYPQKLVNIRVENVMKEKAMEVPAIKAIIEKMEEEMAGNGRILVRPSGTEPLLRVMAEAPTTEEVDYYVDTITDVVRAEIGID.

S101 serves as the catalytic Phosphoserine intermediate. Residues S101, D240, D242, and D244 each coordinate Mg(2+). Phosphoserine is present on S101.

The protein belongs to the phosphohexose mutase family. Mg(2+) serves as cofactor. Post-translationally, activated by phosphorylation.

The enzyme catalyses alpha-D-glucosamine 1-phosphate = D-glucosamine 6-phosphate. Its function is as follows. Catalyzes the conversion of glucosamine-6-phosphate to glucosamine-1-phosphate. The sequence is that of Phosphoglucosamine mutase from Streptococcus pneumoniae (strain JJA).